Consider the following 112-residue polypeptide: Putative pterin-4-alpha-carbinolamine dehydratase (112 aa).

The disordered stretch occupies residues 1–30; sequence MSDELQSRTCTPCRGDVPPMTKAEAKRQLA.

The protein belongs to the pterin-4-alpha-carbinolamine dehydratase family.

The catalysed reaction is (4aS,6R)-4a-hydroxy-L-erythro-5,6,7,8-tetrahydrobiopterin = (6R)-L-erythro-6,7-dihydrobiopterin + H2O. The protein is Putative pterin-4-alpha-carbinolamine dehydratase of Aromatoleum aromaticum (strain DSM 19018 / LMG 30748 / EbN1) (Azoarcus sp. (strain EbN1)).